The sequence spans 279 residues: Probable endonuclease 4 (279 aa).

Zn(2+) is bound by residues H66, H106, E142, D176, H179, H213, D226, H228, and E258.

The protein belongs to the AP endonuclease 2 family. Zn(2+) serves as cofactor.

It carries out the reaction Endonucleolytic cleavage to 5'-phosphooligonucleotide end-products.. Its function is as follows. Endonuclease IV plays a role in DNA repair. It cleaves phosphodiester bonds at apurinic or apyrimidinic (AP) sites, generating a 3'-hydroxyl group and a 5'-terminal sugar phosphate. The protein is Probable endonuclease 4 of Photobacterium profundum (strain SS9).